We begin with the raw amino-acid sequence, 312 residues long: Pantothenate kinase (312 aa).

97–104 (GSVAVGKS) is a binding site for ATP.

This sequence belongs to the prokaryotic pantothenate kinase family.

The protein localises to the cytoplasm. It carries out the reaction (R)-pantothenate + ATP = (R)-4'-phosphopantothenate + ADP + H(+). It functions in the pathway cofactor biosynthesis; coenzyme A biosynthesis; CoA from (R)-pantothenate: step 1/5. The sequence is that of Pantothenate kinase from Corynebacterium glutamicum (strain ATCC 13032 / DSM 20300 / JCM 1318 / BCRC 11384 / CCUG 27702 / LMG 3730 / NBRC 12168 / NCIMB 10025 / NRRL B-2784 / 534).